Reading from the N-terminus, the 226-residue chain is 2-C-methyl-D-erythritol 4-phosphate cytidylyltransferase (226 aa).

It belongs to the IspD/TarI cytidylyltransferase family. IspD subfamily.

It catalyses the reaction 2-C-methyl-D-erythritol 4-phosphate + CTP + H(+) = 4-CDP-2-C-methyl-D-erythritol + diphosphate. Its pathway is isoprenoid biosynthesis; isopentenyl diphosphate biosynthesis via DXP pathway; isopentenyl diphosphate from 1-deoxy-D-xylulose 5-phosphate: step 2/6. In terms of biological role, catalyzes the formation of 4-diphosphocytidyl-2-C-methyl-D-erythritol from CTP and 2-C-methyl-D-erythritol 4-phosphate (MEP). This chain is 2-C-methyl-D-erythritol 4-phosphate cytidylyltransferase, found in Parasynechococcus marenigrum (strain WH8102).